Here is a 721-residue protein sequence, read N- to C-terminus: BBSome complex member bbs-7 (721 aa).

In terms of assembly, part of BBSome complex, that contains at least bbs-1, bbs-2, bbs-4, bbs-5, osm-12, bbs-8/ttc-8 and bbs-9. Interacts with bbs-1. In terms of tissue distribution, expressed in ciliated cells including amphid and both inner and outer labial neurons of the head and in both phasmid neurons PHA and PHB in the tail at larval stages L1 and L2.

It is found in the cell projection. The protein localises to the cilium. It localises to the cytoplasm. The protein resides in the cytoskeleton. Its subcellular location is the cilium basal body. It is found in the cilium axoneme. Its function is as follows. Component of the BBSome complex. The BBSome complex is thought to function as a coat complex required for sorting of specific membrane proteins to the primary cilia. The BBSome complex is required for ciliogenesis but is dispensable for centriolar satellite function. Required for proper BBSome complex assembly and its ciliary localization. Required for cilia biogenesis and both the assembly and movement of intraflagellar transport proteins along the ciliary axoneme. Plays a role in the removal of degraded mechanosensory receptors within the cilia. Plays a role in guanylyl cyclase localization in the ring-like structures at the base of the finger compartment in AFD sensory neurons. In ciliated sensory neurons, required for the sensation of nitric oxide and avoidance of NO-producing organisms like P.aeruginosa. The chain is BBSome complex member bbs-7 from Caenorhabditis elegans.